A 90-amino-acid polypeptide reads, in one-letter code: SAGA-associated factor 11 (90 aa).

The SGF11-type zinc-finger motif lies at 63–84 (FSCDNCGRKIAGGRFAQHINKC).

It belongs to the SGF11 family. Component of the 1.8 MDa SAGA transcription coactivator-HAT complex. SAGA is built of 5 distinct domains with specialized functions. Within the SAGA complex, SUS1, SGF11, SGF73 and UBP8 form an additional subcomplex of SAGA called the DUB module (deubiquitination module). Interacts directly with SGF73, SUS1 and UBP8.

It localises to the nucleus. Functionally, functions as a component of the transcription regulatory histone acetylation (HAT) complex SAGA. At the promoters, SAGA is required for recruitment of the basal transcription machinery. It influences RNA polymerase II transcriptional activity through different activities such as TBP interaction and promoter selectivity, interaction with transcription activators, and chromatin modification through histone acetylation and deubiquitination. SAGA acetylates nucleosomal histone H3 to some extent (to form H3K9ac, H3K14ac, H3K18ac and H3K23ac). SAGA interacts with DNA via upstream activating sequences (UASs). Involved in transcriptional regulation of a subset of SAGA-regulated genes. Within the SAGA complex, participates in a subcomplex, that specifically deubiquitinates histones H2B. The protein is SAGA-associated factor 11 of Lodderomyces elongisporus (strain ATCC 11503 / CBS 2605 / JCM 1781 / NBRC 1676 / NRRL YB-4239) (Yeast).